The chain runs to 88 residues: UPF0297 protein SAK_2030 (88 aa).

It belongs to the UPF0297 family.

The protein is UPF0297 protein SAK_2030 of Streptococcus agalactiae serotype Ia (strain ATCC 27591 / A909 / CDC SS700).